A 400-amino-acid chain; its full sequence is Inositol polyphosphate 1-phosphatase (400 aa).

Asp-54 lines the Li(+) pocket. Glu-79 is a binding site for Mg(2+). Glu-80 contacts Li(+). Mg(2+) contacts are provided by Asp-153 and Ile-155. 1D-myo-inositol 1,4-bisphosphate is bound by residues Asp-156, Ser-157, and Thr-158. A compositionally biased stretch (polar residues) spans 238–257 (STRSNSEAQSQGTQNPSSEG). Positions 238-258 (STRSNSEAQSQGTQNPSSEGS) are disordered. 1D-myo-inositol 1,4-bisphosphate-binding residues include Ser-268, Lys-270, Gly-290, Ala-291, Lys-294, and Thr-312. Position 317 (Asp-317) interacts with Mg(2+). Ser-318 is subject to Phosphoserine.

Belongs to the inositol monophosphatase superfamily. Monomer. It depends on Mg(2+) as a cofactor.

The catalysed reaction is 1D-myo-inositol 1,4-bisphosphate + H2O = 1D-myo-inositol 4-phosphate + phosphate. The enzyme catalyses 1D-myo-inositol 1,3,4-trisphosphate + H2O = 1D-myo-inositol 3,4-bisphosphate + phosphate. It functions in the pathway signal transduction; phosphatidylinositol signaling pathway. Its activity is regulated as follows. Inhibited by Li(+). Functionally, mg(2+)-dependent phosphatase that catalyzes the hydrolysis of the 1-position phosphate from inositol 1,4-bisphosphate and inositol 1,3,4-trisphosphate and participates in inositol phosphate metabolism. This Bos taurus (Bovine) protein is Inositol polyphosphate 1-phosphatase.